The chain runs to 101 residues: Ubiquitin-related modifier 1 homolog (101 aa).

The residue at position 101 (G101) is a 1-thioglycine. G101 is covalently cross-linked (Glycyl lysine isopeptide (Gly-Lys) (interchain with K-? in acceptor proteins)).

This sequence belongs to the URM1 family. In terms of assembly, interacts with cer. Post-translationally, C-terminal thiocarboxylation occurs in 2 steps, it is first acyl-adenylated (-COAMP) via the hesA/moeB/thiF part of the MOCS3 homolog, then thiocarboxylated (-COSH) via the rhodanese domain of the MOCS3 homolog.

It is found in the cytoplasm. It participates in tRNA modification; 5-methoxycarbonylmethyl-2-thiouridine-tRNA biosynthesis. Functionally, acts as a sulfur carrier required for 2-thiolation of mcm(5)S(2)U at tRNA wobble positions of cytosolic tRNA(Lys), tRNA(Glu) and tRNA(Gln). Serves as sulfur donor in tRNA 2-thiolation reaction by being thiocarboxylated (-COSH) at its C-terminus by MOCS3. The sulfur is then transferred to tRNA to form 2-thiolation of mcm(5)S(2)U. Also acts as a ubiquitin-like protein (UBL) that is covalently conjugated via an isopeptide bond to lysine residues of target proteins such as Prx2/Jafrac1, Ciao1, Eip71CD and GILT1. The thiocarboxylated form serves as substrate for conjugation and oxidative stress specifically induces the formation of UBL-protein conjugates. The polypeptide is Ubiquitin-related modifier 1 homolog (Drosophila yakuba (Fruit fly)).